Here is a 271-residue protein sequence, read N- to C-terminus: 4-hydroxy-tetrahydrodipicolinate reductase (271 aa).

NAD(+) is bound by residues glycine 11–methionine 16 and glutamate 37. Arginine 38 is a binding site for NADP(+). Residues glycine 101 to threonine 103 and alanine 125 to methionine 128 each bind NAD(+). Histidine 158 acts as the Proton donor/acceptor in catalysis. Residue histidine 159 participates in (S)-2,3,4,5-tetrahydrodipicolinate binding. Lysine 162 functions as the Proton donor in the catalytic mechanism. Glycine 168 to threonine 169 is a (S)-2,3,4,5-tetrahydrodipicolinate binding site.

This sequence belongs to the DapB family.

It is found in the cytoplasm. It carries out the reaction (S)-2,3,4,5-tetrahydrodipicolinate + NAD(+) + H2O = (2S,4S)-4-hydroxy-2,3,4,5-tetrahydrodipicolinate + NADH + H(+). It catalyses the reaction (S)-2,3,4,5-tetrahydrodipicolinate + NADP(+) + H2O = (2S,4S)-4-hydroxy-2,3,4,5-tetrahydrodipicolinate + NADPH + H(+). It participates in amino-acid biosynthesis; L-lysine biosynthesis via DAP pathway; (S)-tetrahydrodipicolinate from L-aspartate: step 4/4. In terms of biological role, catalyzes the conversion of 4-hydroxy-tetrahydrodipicolinate (HTPA) to tetrahydrodipicolinate. This is 4-hydroxy-tetrahydrodipicolinate reductase from Shewanella loihica (strain ATCC BAA-1088 / PV-4).